A 301-amino-acid chain; its full sequence is Glycine--tRNA ligase alpha subunit (301 aa).

This sequence belongs to the class-II aminoacyl-tRNA synthetase family. Tetramer of two alpha and two beta subunits.

The protein localises to the cytoplasm. It catalyses the reaction tRNA(Gly) + glycine + ATP = glycyl-tRNA(Gly) + AMP + diphosphate. This is Glycine--tRNA ligase alpha subunit from Shewanella amazonensis (strain ATCC BAA-1098 / SB2B).